The primary structure comprises 1047 residues: Carbamoyl phosphate synthase large chain (1047 aa).

The segment at 1-398 (MPRRDDIHRI…ALMKAIASLD (398 aa)) is carboxyphosphate synthetic domain. Positions 129, 169, 175, 176, 208, 210, 215, 241, 242, 243, 284, and 296 each coordinate ATP. The region spanning 133–325 (YEFLKAMGEP…IARIAAKIAA (193 aa)) is the ATP-grasp 1 domain. The Mg(2+) site is built by glutamine 284, glutamate 296, and asparagine 298. Residues glutamine 284, glutamate 296, and asparagine 298 each coordinate Mn(2+). An oligomerization domain region spans residues 399 to 539 (NAFSSNIRLH…YSTYEDEDET (141 aa)). The interval 540–916 (PDLSGSIMII…ALRKSLQRSI (377 aa)) is carbamoyl phosphate synthetic domain. The ATP-grasp 2 domain occupies 665–854 (SRVIEGLGIK…WVRLAVECMI (190 aa)). 10 residues coordinate ATP: arginine 701, lysine 738, leucine 740, glutamate 745, glycine 770, valine 771, histidine 772, serine 773, glutamine 813, and glutamate 825. Residues glutamine 813, glutamate 825, and asparagine 827 each coordinate Mg(2+). Residues glutamine 813, glutamate 825, and asparagine 827 each coordinate Mn(2+). An MGS-like domain is found at 910–1047 (KSLQRSISSV…REIGDYLQVS (138 aa)). An allosteric domain region spans residues 916-1047 (ISSVLITVRD…REIGDYLQVS (132 aa)).

Belongs to the CarB family. As to quaternary structure, composed of two chains; the small (or glutamine) chain promotes the hydrolysis of glutamine to ammonia, which is used by the large (or ammonia) chain to synthesize carbamoyl phosphate. Tetramer of heterodimers (alpha,beta)4. Mg(2+) is required as a cofactor. It depends on Mn(2+) as a cofactor.

The catalysed reaction is hydrogencarbonate + L-glutamine + 2 ATP + H2O = carbamoyl phosphate + L-glutamate + 2 ADP + phosphate + 2 H(+). It carries out the reaction hydrogencarbonate + NH4(+) + 2 ATP = carbamoyl phosphate + 2 ADP + phosphate + 2 H(+). Its pathway is amino-acid biosynthesis; L-arginine biosynthesis; carbamoyl phosphate from bicarbonate: step 1/1. It participates in pyrimidine metabolism; UMP biosynthesis via de novo pathway; (S)-dihydroorotate from bicarbonate: step 1/3. Large subunit of the glutamine-dependent carbamoyl phosphate synthetase (CPSase). CPSase catalyzes the formation of carbamoyl phosphate from the ammonia moiety of glutamine, carbonate, and phosphate donated by ATP, constituting the first step of 2 biosynthetic pathways, one leading to arginine and/or urea and the other to pyrimidine nucleotides. The large subunit (synthetase) binds the substrates ammonia (free or transferred from glutamine from the small subunit), hydrogencarbonate and ATP and carries out an ATP-coupled ligase reaction, activating hydrogencarbonate by forming carboxy phosphate which reacts with ammonia to form carbamoyl phosphate. This Thermoplasma acidophilum (strain ATCC 25905 / DSM 1728 / JCM 9062 / NBRC 15155 / AMRC-C165) protein is Carbamoyl phosphate synthase large chain.